Reading from the N-terminus, the 77-residue chain is Putative defensin-like protein 160 (77 aa).

A signal peptide spans 1 to 24; the sequence is MAKLSCSYFFILMLVFSALLMVEC. 4 cysteine pairs are disulfide-bonded: C30–C77, C40–C59, C45–C71, and C49–C73.

Belongs to the DEFL family.

The protein localises to the secreted. This is Putative defensin-like protein 160 (LCR26) from Arabidopsis thaliana (Mouse-ear cress).